Reading from the N-terminus, the 423-residue chain is Gamma-glutamyl phosphate reductase (423 aa).

The protein belongs to the gamma-glutamyl phosphate reductase family.

It localises to the cytoplasm. The enzyme catalyses L-glutamate 5-semialdehyde + phosphate + NADP(+) = L-glutamyl 5-phosphate + NADPH + H(+). The protein operates within amino-acid biosynthesis; L-proline biosynthesis; L-glutamate 5-semialdehyde from L-glutamate: step 2/2. In terms of biological role, catalyzes the NADPH-dependent reduction of L-glutamate 5-phosphate into L-glutamate 5-semialdehyde and phosphate. The product spontaneously undergoes cyclization to form 1-pyrroline-5-carboxylate. The protein is Gamma-glutamyl phosphate reductase of Burkholderia orbicola (strain MC0-3).